A 189-amino-acid chain; its full sequence is Ribosome maturation factor RimM (189 aa).

The 77-residue stretch at 113-189 folds into the PRC barrel domain; that stretch reads DGEYYWVDLL…TIVADWQPDY (77 aa).

It belongs to the RimM family. In terms of assembly, binds ribosomal protein uS19.

The protein localises to the cytoplasm. Its function is as follows. An accessory protein needed during the final step in the assembly of 30S ribosomal subunit, possibly for assembly of the head region. Essential for efficient processing of 16S rRNA. May be needed both before and after RbfA during the maturation of 16S rRNA. It has affinity for free ribosomal 30S subunits but not for 70S ribosomes. The chain is Ribosome maturation factor RimM from Delftia acidovorans (strain DSM 14801 / SPH-1).